Consider the following 185-residue polypeptide: Ribosome-recycling factor (185 aa).

Belongs to the RRF family.

Its subcellular location is the cytoplasm. Its function is as follows. Responsible for the release of ribosomes from messenger RNA at the termination of protein biosynthesis. May increase the efficiency of translation by recycling ribosomes from one round of translation to another. The polypeptide is Ribosome-recycling factor (Buchnera aphidicola subsp. Acyrthosiphon pisum (strain Tuc7)).